The sequence spans 2188 residues: Genome polyprotein (2188 aa).

The Cell attachment site signature appears at 772–774; it reads RGD. Positions 795-889 constitute an LRAT domain; it reads LAYLDRGFYK…DIFGTHTLSQ (95 aa). The active-site For protein 2A H-NC is the H805. Catalysis depends on C874, which acts as the For protein 2A H-NC; Acyl-thioester intermediate. Residues 1165–1326 form the SF3 helicase domain; that stretch reads FQELARIPNR…KAYSKSGKLN (162 aa). Residue 1193–1200 participates in ATP binding; it reads GEPGQGKS. The residue at position 1502 (Y1502) is an O-(5'-phospho-RNA)-tyrosine. A Peptidase C3 domain is found at 1526 to 1716; sequence APYDGQLEHI…IPFNFLKNDM (191 aa). Residues H1566, D1604, and C1678 each act as for protease 3C activity in the active site. Catalysis depends on C1905, which acts as the Acyl-thioester intermediate. A RdRp catalytic domain is found at 1953–2067; it reads DYNYEMDYSQ…SLDREIEPER (115 aa). Mg(2+) is bound by residues D1959 and D2053.

Belongs to the picornaviruses polyprotein family. In terms of assembly, interacts with capsid protein VP1 and capsid protein VP3 to form heterotrimeric protomers. Five protomers subsequently associate to form pentamers which serve as building blocks for the capsid. Interacts with capsid protein VP0, and capsid protein VP3 to form heterotrimeric protomers. Five protomers subsequently associate to form pentamers which serve as building blocks for the capsid. As to quaternary structure, interacts with capsid protein VP0 and capsid protein VP1 to form heterotrimeric protomers. Five protomers subsequently associate to form pentamers which serve as building blocks for the capsid. In terms of assembly, homohexamer; forms a hexameric ring structure with 6-fold symmetry characteristic of AAA+ ATPases. Homodimer. Interacts with host ACBD3. As to quaternary structure, interacts with RNA-directed RNA polymerase. In terms of assembly, interacts with Viral protein genome-linked. Requires Mg(2+) as cofactor. VPg is uridylylated by the polymerase and is covalently linked to the 5'-end of genomic RNA. This uridylylated form acts as a nucleotide-peptide primer for the polymerase. Post-translationally, specific enzymatic cleavages yield mature proteins. All cleavages are catalyzed by P3C.

Its subcellular location is the virion. It localises to the host cytoplasm. The protein localises to the host nucleus. It is found in the host nucleolus. The protein resides in the host cytoplasmic vesicle membrane. It carries out the reaction RNA(n) + a ribonucleoside 5'-triphosphate = RNA(n+1) + diphosphate. It catalyses the reaction a ribonucleoside 5'-triphosphate + H2O = a ribonucleoside 5'-diphosphate + phosphate + H(+). The enzyme catalyses Selective cleavage of Gln-|-Gly bond in the poliovirus polyprotein. In other picornavirus reactions Glu may be substituted for Gln, and Ser or Thr for Gly.. Forms an icosahedral capsid of pseudo T=3 symmetry together with capsid proteins VP1 and VP3. The capsid is 300 Angstroms in diameter, composed of 60 copies of each capsid protein and enclosing the viral positive strand RNA genome. Capsid proteins interact with host alpha-V/beta-3 integrin heterodimer to provide virion attachment target cell. This attachment induces virion internalization predominantly through clathrin-mediated endocytosis. Binds packaging signals present in the viral RNA. Functionally, forms an icosahedral capsid of pseudo T=3 symmetry together with capsid proteins VP0 and VP1. The capsid is 300 Angstroms in diameter, composed of 60 copies of each capsid protein and enclosing the viral positive strand RNA genome. Capsid proteins interact with host alpha-V/beta-3 integrin heterodimer to provide virion attachment target cell. This attachment induces virion internalization predominantly through clathrin-mediated endocytosis. Binds packaging signals present in the viral RNA. In terms of biological role, forms an icosahedral capsid of pseudo T=3 symmetry together with capsid proteins VP0 and VP3. The capsid is 300 Angstroms in diameter, composed of 60 copies of each capsid protein and enclosing the viral positive strand RNA genome. Capsid proteins interact with host alpha-V/beta-3 integrin heterodimer to provide virion attachment target cell. This attachment induces virion internalization predominantly through clathrin-mediated endocytosis. Binds packaging signals present in the viral RNA. Its function is as follows. Is not a protease. Plays an essential role in the virus replication cycle by acting as a viroporin. Creates a pore in the host endoplasmic reticulum and as a consequence releases Ca2+ in the cytoplasm of infected cell. In turn, high levels of cytoplasmic calcium may trigger membrane trafficking and transport of viral ER-associated proteins to viroplasms, sites of viral genome replication. Functionally, induces and associates with structural rearrangements of intracellular membranes. Displays RNA-binding, nucleotide binding and NTPase activities. May play a role in virion morphogenesis and viral RNA encapsidation by interacting with the capsid protein VP3. In terms of biological role, localizes the viral replication complex to the surface of membranous vesicles. It inhibits host cell endoplasmic reticulum-to-Golgi apparatus transport and causes the disassembly of the Golgi complex, possibly through GBF1 interaction. This would result in depletion of MHC, trail receptors and IFN receptors at the host cell surface. Plays an essential role in viral RNA replication by recruiting ACBD3 and PI4KB at the viral replication sites, thereby allowing the formation of the rearranged membranous structures where viral replication takes place. Its function is as follows. Acts as a primer for viral RNA replication and remains covalently bound to viral genomic RNA. VPg is uridylylated prior to priming replication into VPg-pUpU. The VPg-pUpU is then used as primer on the genomic RNA poly(A) by the RNA-dependent RNA polymerase to replicate the viral genome. Following genome release from the infecting virion in the cytoplasm, the VPg-RNA linkage is probably removed by host TDP2. During the late stage of the replication cycle, host TDP2 is excluded from sites of viral RNA synthesis and encapsidation, allowing for the generation of progeny virions. Cysteine protease that generates mature viral proteins from the precursor polyprotein. In addition to its proteolytic activity, it binds to viral RNA, and thus influences viral genome replication. RNA and substrate bind cooperatively to the protease. Functionally, replicates the viral genomic RNA on the surface of intracellular membranes. Covalently attaches UMP to a tyrosine of VPg, which is used to prime RNA synthesis. The positive stranded RNA genome is first replicated at virus induced membranous vesicles, creating a dsRNA genomic replication form. This dsRNA is then used as template to synthesize positive stranded RNA genomes. ss(+)RNA genomes are either translated, replicated or encapsidated. This Human parechovirus 5 (strain CT86-6760) (HPeV-5) protein is Genome polyprotein.